The sequence spans 100 residues: Urease subunit gamma (100 aa).

Belongs to the urease gamma subunit family. Heterotrimer of UreA (gamma), UreB (beta) and UreC (alpha) subunits. Three heterotrimers associate to form the active enzyme.

The protein resides in the cytoplasm. The catalysed reaction is urea + 2 H2O + H(+) = hydrogencarbonate + 2 NH4(+). Its pathway is nitrogen metabolism; urea degradation; CO(2) and NH(3) from urea (urease route): step 1/1. The chain is Urease subunit gamma from Pseudomonas fluorescens (strain ATCC BAA-477 / NRRL B-23932 / Pf-5).